Reading from the N-terminus, the 189-residue chain is Flavin prenyltransferase UbiX (189 aa).

FMN contacts are provided by residues 11-13, S37, 88-91, and R123; these read GAS and SMRT. Y153 lines the dimethylallyl phosphate pocket.

The protein belongs to the UbiX/PAD1 family.

It carries out the reaction dimethylallyl phosphate + FMNH2 = prenylated FMNH2 + phosphate. In terms of biological role, flavin prenyltransferase that catalyzes the synthesis of the prenylated FMN cofactor (prenyl-FMN) for 4-hydroxy-3-polyprenylbenzoic acid decarboxylase UbiD. The prenyltransferase is metal-independent and links a dimethylallyl moiety from dimethylallyl monophosphate (DMAP) to the flavin N5 and C6 atoms of FMN. The chain is Flavin prenyltransferase UbiX from Neisseria meningitidis serogroup B (strain ATCC BAA-335 / MC58).